Here is a 469-residue protein sequence, read N- to C-terminus: MSQEDITGKDRLQELIGADYRLQWIIGHGGMSTVWLADDVVNDREVAIKVLRPEFSDNQEFLNRFRNEAQAAENIDSEHVVATYDYREVPDPAGHTFCFIVMEFVRGESLADLLEREGRLPEDLALDVMEQAAHGLSVIHRMDMVHRDIKPGNMLITANGIVKITDFGIAKAAAAVPLTRTGMVVGTAQYVSPEQAQGKEVTAASDIYSLGVVGYEMMAGRRPFTGDSSVSVAIAHINQAPPQMPTSISAQTRELIGIALRKDPGRRFPDGNEMALAVSAVRLGKRPPQPRTSAMMAQAEAPSPSESTAMLGRVARPATITQEAAPKRGSGIGIGLFIAALLAVIIGAVIYAGTTGILFNDTPEETTTPETITETYTPTVEETTSQWVPPTPPTRSTFTEPETTSHRPTTSEESTSEEPTTEAPTSSRTVPQIPTSTPRTSASVPVETNAPADDLIDAVNGLLDVGGAQ.

The region spanning Tyr20–Val281 is the Protein kinase domain. ATP-binding positions include Ile26–Val34 and Lys49. Asp148 functions as the Proton acceptor in the catalytic mechanism. 2 disordered regions span residues Arg286 to Ser307 and Phe359 to Asp454. Composition is skewed to low complexity over residues Glu365–Thr384 and Thr399–Glu413. Residues Val430 to Ser443 are compositionally biased toward polar residues.

Belongs to the protein kinase superfamily. Ser/Thr protein kinase family.

The enzyme catalyses L-seryl-[protein] + ATP = O-phospho-L-seryl-[protein] + ADP + H(+). The catalysed reaction is L-threonyl-[protein] + ATP = O-phospho-L-threonyl-[protein] + ADP + H(+). The polypeptide is Serine/threonine-protein kinases PknA (pknA) (Corynebacterium glutamicum (strain ATCC 13032 / DSM 20300 / JCM 1318 / BCRC 11384 / CCUG 27702 / LMG 3730 / NBRC 12168 / NCIMB 10025 / NRRL B-2784 / 534)).